Here is a 415-residue protein sequence, read N- to C-terminus: MNRTVQKLLPWLTASAQDVEKVRNESIRLDPILMVAVLALLAWGLVMVTSASMELGERFGNPFFFVIRQTIAVVIGASITVWLVLRQPIALWVEYKLWILIASLLLLLVVLLPGIGHSVNGANRWIPLGPVNIQVSEFARLGLIIWMAGYIATHTIKLQNRITGMLGPGVVIFAASLLLLLQPDFGTTAVLAATLFAMAWLARAQWQMMVGSTLVMGVLGVFVVLSEQYRIERLLSFSNPFADPFGHGYQLANALIAIGTGGVWGRGLGESIQKLSYLPEAHTDFIFAVLAEELGLIGVIALIGLYGLIVWRGFVIANMAWKENQIAGAALAWGISVWIGMQALINMGVNMGVLPTKGLTLPLMSYGGSAMIVALISLGFLMRVHHEAAMVAELREAQMTKRQQDASIRTKEVLS.

11 helical membrane-spanning segments follow: residues Pro31–Ala51, Phe63–Leu83, Leu97–His117, Ile133–Thr153, Ile162–Gln182, Phe185–Gln205, Trp206–Ser226, Phe245–Gly265, Phe285–Leu305, Ile326–Asn346, and Leu361–Leu381.

It belongs to the SEDS family. FtsW subfamily.

It is found in the cell inner membrane. The catalysed reaction is [GlcNAc-(1-&gt;4)-Mur2Ac(oyl-L-Ala-gamma-D-Glu-L-Lys-D-Ala-D-Ala)](n)-di-trans,octa-cis-undecaprenyl diphosphate + beta-D-GlcNAc-(1-&gt;4)-Mur2Ac(oyl-L-Ala-gamma-D-Glu-L-Lys-D-Ala-D-Ala)-di-trans,octa-cis-undecaprenyl diphosphate = [GlcNAc-(1-&gt;4)-Mur2Ac(oyl-L-Ala-gamma-D-Glu-L-Lys-D-Ala-D-Ala)](n+1)-di-trans,octa-cis-undecaprenyl diphosphate + di-trans,octa-cis-undecaprenyl diphosphate + H(+). It participates in cell wall biogenesis; peptidoglycan biosynthesis. In terms of biological role, peptidoglycan polymerase that is essential for cell division. The polypeptide is Probable peptidoglycan glycosyltransferase FtsW (Halothiobacillus neapolitanus (strain ATCC 23641 / c2) (Thiobacillus neapolitanus)).